We begin with the raw amino-acid sequence, 357 residues long: Low-salt glycan biosynthesis nucleotidyltransferase Agl11 (357 aa).

Mg(2+)-binding residues include Asp-108 and Asp-221.

It belongs to the glucose-1-phosphate thymidylyltransferase family. Requires Mg(2+) as cofactor.

Its pathway is protein modification; protein glycosylation. It functions in the pathway cell surface structure biogenesis; S-layer biogenesis. Nucleotidyltransferase involved in N-glycan biosynthetic pathway that takes place under low-salt conditions (1.75 M instead of 3.4 M). Participates in the formation of the tetrasaccharide present at 'Asn-532' of S-layer glycoprotein Csg, consisting of a sulfated hexose, 2 hexoses and rhamnose. Involved in the addition of final rhamnose (sugar 4) of the tetrasaccharide on the dolichol phosphate carrier. This Haloferax volcanii (strain ATCC 29605 / DSM 3757 / JCM 8879 / NBRC 14742 / NCIMB 2012 / VKM B-1768 / DS2) (Halobacterium volcanii) protein is Low-salt glycan biosynthesis nucleotidyltransferase Agl11 (agl11).